A 93-amino-acid polypeptide reads, in one-letter code: Alpha-defensin 6/12 (93 aa).

The signal sequence occupies residues 1 to 19 (MKTLILLSALVLLAFQVQA). Residues 20–60 (DPIQNTDEETKTEEQPGEEDQAVSVSFGDPEGTSLQEESLR) constitute a propeptide that is removed on maturation. The segment at 23-54 (QNTDEETKTEEQPGEEDQAVSVSFGDPEGTSL) is disordered. Disulfide bonds link Cys64-Cys92, Cys66-Cys81, and Cys71-Cys91.

The protein belongs to the alpha-defensin family. Paneth cells of the small bowel.

The protein localises to the secreted. Its function is as follows. Has broad-spectrum antimicrobial properties. Has antibacterial activity against the Gram-positive bacterium L.monocytogenes EGD and the Gram-negative bacteria E.coli ML-35p and avirulent S.typhimurium 7953, but not against the mouse-virulent S.typhimurium 14028S. Probably contributes to the antimicrobial barrier function of the small bowel mucosa. The polypeptide is Alpha-defensin 6/12 (Defa6) (Mus musculus (Mouse)).